The primary structure comprises 264 residues: MNTRPADFSAVQAATSLTQFRSASPLVHCLTNDVVQSFTANVLLALNASPAMVVDPEEAAQFSAVADALLINVGTLERSRAEAMRTAVNSAHQAGTPWVLDPVAVGGLIFRSEFCRELLAWKPAAIRGNASEIMALAGLAAQGRGVDSADDSLAALPAARELARQVGTIVAVTGAVDYVTDGERDIAITGGDSMMTRVVGTGCALSAVVAGFCSLEGDRVSHVAAACYVMALAGQQAASVSQGTGSFIPNFLDRLYTLRAEDLA.

Met52 contacts substrate. The ATP site is built by Arg127 and Thr173. Gly200 lines the substrate pocket.

The protein belongs to the Thz kinase family. Mg(2+) serves as cofactor.

The enzyme catalyses 5-(2-hydroxyethyl)-4-methylthiazole + ATP = 4-methyl-5-(2-phosphooxyethyl)-thiazole + ADP + H(+). Its pathway is cofactor biosynthesis; thiamine diphosphate biosynthesis; 4-methyl-5-(2-phosphoethyl)-thiazole from 5-(2-hydroxyethyl)-4-methylthiazole: step 1/1. Its function is as follows. Catalyzes the phosphorylation of the hydroxyl group of 4-methyl-5-beta-hydroxyethylthiazole (THZ). This chain is Hydroxyethylthiazole kinase, found in Pectobacterium carotovorum subsp. carotovorum (strain PC1).